The following is a 940-amino-acid chain: UvrABC system protein A (940 aa).

ATP is bound at residue 31-38; sequence GLSGSGKS. A C4-type zinc finger spans residues 252-279; the sequence is CPHCGYSMRELEPRLFSFNNPAGACPTC. 2 ABC transporter domains span residues 309 to 586 and 606 to 936; these read WDQK…PNSL and KDAK…RFLK. Residue 639 to 646 coordinates ATP; that stretch reads GVSGSGKS. The segment at 739–765 adopts a C4-type zinc-finger fold; sequence CEACQGDGVIKVEMHFLPDVYVPCDVC.

It belongs to the ABC transporter superfamily. UvrA family. As to quaternary structure, forms a heterotetramer with UvrB during the search for lesions.

The protein localises to the cytoplasm. Functionally, the UvrABC repair system catalyzes the recognition and processing of DNA lesions. UvrA is an ATPase and a DNA-binding protein. A damage recognition complex composed of 2 UvrA and 2 UvrB subunits scans DNA for abnormalities. When the presence of a lesion has been verified by UvrB, the UvrA molecules dissociate. This chain is UvrABC system protein A, found in Vibrio cholerae serotype O1 (strain ATCC 39315 / El Tor Inaba N16961).